Consider the following 293-residue polypeptide: 4-hydroxy-tetrahydrodipicolinate synthase (293 aa).

Pyruvate is bound at residue T47. Y136 functions as the Proton donor/acceptor in the catalytic mechanism. K164 functions as the Schiff-base intermediate with substrate in the catalytic mechanism. A pyruvate-binding site is contributed by I206.

It belongs to the DapA family. As to quaternary structure, homotetramer; dimer of dimers.

The protein resides in the cytoplasm. It carries out the reaction L-aspartate 4-semialdehyde + pyruvate = (2S,4S)-4-hydroxy-2,3,4,5-tetrahydrodipicolinate + H2O + H(+). The protein operates within amino-acid biosynthesis; L-lysine biosynthesis via DAP pathway; (S)-tetrahydrodipicolinate from L-aspartate: step 3/4. Functionally, catalyzes the condensation of (S)-aspartate-beta-semialdehyde [(S)-ASA] and pyruvate to 4-hydroxy-tetrahydrodipicolinate (HTPA). The protein is 4-hydroxy-tetrahydrodipicolinate synthase of Listeria welshimeri serovar 6b (strain ATCC 35897 / DSM 20650 / CCUG 15529 / CIP 8149 / NCTC 11857 / SLCC 5334 / V8).